The chain runs to 684 residues: Macrolide export ATP-binding/permease protein MacB (684 aa).

The region spanning 2–243 (IQLYGLRKDY…RSRLANSRAE (242 aa)) is the ABC transporter domain. An ATP-binding site is contributed by 38–45 (GSSGSGKT). Transmembrane regions (helical) follow at residues 248-268 (PASA…VLAL), 275-295 (TVLT…TMEL), 563-583 (LVIA…IMLV), 615-635 (VLCV…SVLV), and 644-664 (AMSI…GIVF).

The protein belongs to the ABC transporter superfamily. Macrolide exporter (TC 3.A.1.122) family. Homodimer.

It is found in the cell inner membrane. Its function is as follows. Non-canonical ABC transporter that contains transmembrane domains (TMD), which form a pore in the inner membrane, and an ATP-binding domain (NBD), which is responsible for energy generation. Confers resistance against macrolides. This is Macrolide export ATP-binding/permease protein MacB from Rhodopirellula baltica (strain DSM 10527 / NCIMB 13988 / SH1).